Reading from the N-terminus, the 447-residue chain is Chromosomal replication initiator protein DnaA (447 aa).

Residues 1–70 (MQDFWSKAMD…EEILSEQLGE (70 aa)) form a domain I, interacts with DnaA modulators region. Residues 70–110 (EPVTLLFAADPALEKPVASKTQTVTPVQSGGETGDQENFHS) are domain II. Positions 87 to 109 (ASKTQTVTPVQSGGETGDQENFH) are disordered. Polar residues predominate over residues 88–99 (SKTQTVTPVQSG). Positions 111-327 (GLDPRYTFDS…GALIRVSAYA (217 aa)) are domain III, AAA+ region. G155, G157, K158, and T159 together coordinate ATP. Residues 328–447 (SLTGKPITMA…LASLKSMLQK (120 aa)) are domain IV, binds dsDNA.

This sequence belongs to the DnaA family. In terms of assembly, oligomerizes as a right-handed, spiral filament on DNA at oriC.

Its subcellular location is the cytoplasm. Its function is as follows. Plays an essential role in the initiation and regulation of chromosomal replication. ATP-DnaA binds to the origin of replication (oriC) to initiate formation of the DNA replication initiation complex once per cell cycle. Binds the DnaA box (a 9 base pair repeat at the origin) and separates the double-stranded (ds)DNA. Forms a right-handed helical filament on oriC DNA; dsDNA binds to the exterior of the filament while single-stranded (ss)DNA is stabiized in the filament's interior. The ATP-DnaA-oriC complex binds and stabilizes one strand of the AT-rich DNA unwinding element (DUE), permitting loading of DNA polymerase. After initiation quickly degrades to an ADP-DnaA complex that is not apt for DNA replication. Binds acidic phospholipids. The polypeptide is Chromosomal replication initiator protein DnaA (Magnetococcus marinus (strain ATCC BAA-1437 / JCM 17883 / MC-1)).